The primary structure comprises 459 residues: ATP synthase subunit beta (459 aa).

Residue 149-156 (GGAGVGKT) participates in ATP binding.

The protein belongs to the ATPase alpha/beta chains family. F-type ATPases have 2 components, CF(1) - the catalytic core - and CF(0) - the membrane proton channel. CF(1) has five subunits: alpha(3), beta(3), gamma(1), delta(1), epsilon(1). CF(0) has three main subunits: a(1), b(2) and c(9-12). The alpha and beta chains form an alternating ring which encloses part of the gamma chain. CF(1) is attached to CF(0) by a central stalk formed by the gamma and epsilon chains, while a peripheral stalk is formed by the delta and b chains.

Its subcellular location is the cell inner membrane. The catalysed reaction is ATP + H2O + 4 H(+)(in) = ADP + phosphate + 5 H(+)(out). Produces ATP from ADP in the presence of a proton gradient across the membrane. The catalytic sites are hosted primarily by the beta subunits. This chain is ATP synthase subunit beta, found in Pseudomonas savastanoi pv. phaseolicola (strain 1448A / Race 6) (Pseudomonas syringae pv. phaseolicola (strain 1448A / Race 6)).